We begin with the raw amino-acid sequence, 427 residues long: Glutamate-1-semialdehyde 2,1-aminomutase (427 aa).

K265 is modified (N6-(pyridoxal phosphate)lysine).

It belongs to the class-III pyridoxal-phosphate-dependent aminotransferase family. HemL subfamily. In terms of assembly, homodimer. The cofactor is pyridoxal 5'-phosphate.

It localises to the cytoplasm. The catalysed reaction is (S)-4-amino-5-oxopentanoate = 5-aminolevulinate. It participates in porphyrin-containing compound metabolism; protoporphyrin-IX biosynthesis; 5-aminolevulinate from L-glutamyl-tRNA(Glu): step 2/2. This Bordetella avium (strain 197N) protein is Glutamate-1-semialdehyde 2,1-aminomutase.